Consider the following 107-residue polypeptide: Large ribosomal subunit protein uL24 (107 aa).

Belongs to the universal ribosomal protein uL24 family. Part of the 50S ribosomal subunit.

Functionally, one of two assembly initiator proteins, it binds directly to the 5'-end of the 23S rRNA, where it nucleates assembly of the 50S subunit. One of the proteins that surrounds the polypeptide exit tunnel on the outside of the subunit. This is Large ribosomal subunit protein uL24 from Mesomycoplasma hyopneumoniae (strain J / ATCC 25934 / NCTC 10110) (Mycoplasma hyopneumoniae).